A 602-amino-acid polypeptide reads, in one-letter code: Elongation factor 4 (602 aa).

Residues 7–189 enclose the tr-type G domain; that stretch reads KFIRNFSIIA…QLVVAIPPPV (183 aa). Residues 19 to 24 and 136 to 139 each bind GTP; these read DHGKST and NKID.

Belongs to the TRAFAC class translation factor GTPase superfamily. Classic translation factor GTPase family. LepA subfamily.

The protein localises to the cell inner membrane. It catalyses the reaction GTP + H2O = GDP + phosphate + H(+). Functionally, required for accurate and efficient protein synthesis under certain stress conditions. May act as a fidelity factor of the translation reaction, by catalyzing a one-codon backward translocation of tRNAs on improperly translocated ribosomes. Back-translocation proceeds from a post-translocation (POST) complex to a pre-translocation (PRE) complex, thus giving elongation factor G a second chance to translocate the tRNAs correctly. Binds to ribosomes in a GTP-dependent manner. The sequence is that of Elongation factor 4 from Coxiella burnetii (strain Dugway 5J108-111).